An 87-amino-acid chain; its full sequence is U3-theraphotoxin-Hhn1a 6 (87 aa).

Residues 1-24 form the signal peptide; it reads MVNMKASMFLTFAGLVLLFVVCYA. The propeptide occupies 25-52; that stretch reads SESEKKEFPKEMLSSIFAVDNDFKQEER. Disulfide bonds link Cys-54-Cys-67, Cys-61-Cys-72, and Cys-66-Cys-79.

Belongs to the neurotoxin 10 (Hwtx-1) family. 51 (Hntx-8) subfamily. Hntx-8 sub-subfamily. As to expression, expressed by the venom gland.

The protein localises to the secreted. Functionally, ion channel inhibitor. This Cyriopagopus hainanus (Chinese bird spider) protein is U3-theraphotoxin-Hhn1a 6.